The primary structure comprises 209 residues: Large ribosomal subunit protein uL3 (209 aa).

The protein belongs to the universal ribosomal protein uL3 family. As to quaternary structure, part of the 50S ribosomal subunit. Forms a cluster with proteins L14 and L19.

Its function is as follows. One of the primary rRNA binding proteins, it binds directly near the 3'-end of the 23S rRNA, where it nucleates assembly of the 50S subunit. This Clostridium tetani (strain Massachusetts / E88) protein is Large ribosomal subunit protein uL3.